A 154-amino-acid polypeptide reads, in one-letter code: Putative esterase AF_2264 (154 aa).

This sequence belongs to the thioesterase PaaI family.

The polypeptide is Putative esterase AF_2264 (Archaeoglobus fulgidus (strain ATCC 49558 / DSM 4304 / JCM 9628 / NBRC 100126 / VC-16)).